Reading from the N-terminus, the 219-residue chain is MTSNVQLSETNSPRNQKTRPRAEKEEVDYMQRAQWLRAALLGANDGLVTVASLMMGVGSIKEDVKAMLLVGFAGLVAGACSMAIGEFVSVCTQRDIETAQMKRAIEHKTSLSAIDEQEEEEKKERLPNPGQAAIASALAFSVGAAMPLLGAVFIENHKVRMVVVAVVATIALVVFGVTGAVLGKTSVVKSSVRVVIGGWMAMALTFGLTKFIGSAAMQI.

Residues 1-15 (MTSNVQLSETNSPRN) show a composition bias toward polar residues. The interval 1 to 26 (MTSNVQLSETNSPRNQKTRPRAEKEE) is disordered. Thr-2 carries the post-translational modification N-acetylthreonine. Residues 2–37 (TSNVQLSETNSPRNQKTRPRAEKEEVDYMQRAQWLR) lie on the Cytoplasmic side of the membrane. A helical membrane pass occupies residues 38–58 (AALLGANDGLVTVASLMMGVG). Residues 59–67 (SIKEDVKAM) are Vacuolar-facing. Residues 68 to 88 (LLVGFAGLVAGACSMAIGEFV) form a helical membrane-spanning segment. At 89–133 (SVCTQRDIETAQMKRAIEHKTSLSAIDEQEEEEKKERLPNPGQAA) the chain is on the cytoplasmic side. A helical transmembrane segment spans residues 134 to 154 (IASALAFSVGAAMPLLGAVFI). Topologically, residues 155–161 (ENHKVRM) are vacuolar. Residues 162-182 (VVVAVVATIALVVFGVTGAVL) traverse the membrane as a helical segment. The Cytoplasmic portion of the chain corresponds to 183 to 193 (GKTSVVKSSVR). The helical transmembrane segment at 194 to 214 (VVIGGWMAMALTFGLTKFIGS) threads the bilayer. At 215–219 (AAMQI) the chain is on the vacuolar side.

This sequence belongs to the CCC1 family. As to expression, highly expressed in roots. inflorescences and at lower levels in leaves.

The protein localises to the vacuole membrane. The catalysed reaction is Fe(2+)(in) = Fe(2+)(out). Its function is as follows. Vacuolar iron transporter involved in the transfer of iron ions from the cytosol to the vacuole for intracellular iron storage. Involved in regulation of cellular iron homeostasis. Vacuolar iron storage is required for seed embryo and seedling development. This Arabidopsis thaliana (Mouse-ear cress) protein is Vacuolar iron transporter homolog 2.1.